The chain runs to 136 residues: Lipoprotein YghG (136 aa).

A signal peptide spans Met-1–Gly-24. Residue Cys-25 is the site of N-palmitoyl cysteine attachment. The S-diacylglycerol cysteine moiety is linked to residue Cys-25.

This sequence belongs to the GspS/AspS pilotin family.

The protein localises to the cell outer membrane. Its function is as follows. Involved in a type II secretion system (T2SS, formerly general secretion pathway, GSP) for the export of folded proteins across the outer membrane. In a functional T2SS this subunit helps assemble the outer membrane channel. This is Lipoprotein YghG (yghG) from Escherichia coli (strain K12).